Here is a 483-residue protein sequence, read N- to C-terminus: ATP-dependent RNA helicase DDX25 (483 aa).

Thr49 is modified (phosphothreonine). The Nuclear export signal motif lies at 61–74 (LAANSLLNKLIRQS). Residues 97–125 (KTFEELRLKEELLKGIYAMGFNRPSKIQE) carry the Q motif motif. Positions 100–114 (EELRLKEELLKGIYA) match the Nuclear localization signal motif. In terms of domain architecture, Helicase ATP-binding spans 130–300 (MMLAHPPQNL…ERIIPDPNVI (171 aa)). 143–150 (SQSGTGKT) serves as a coordination point for ATP. Residues 247-250 (DEAD) carry the DEAD box motif. The Helicase C-terminal domain maps to 311 to 478 (NIRQYYVLCE…QLDPEDMDEI (168 aa)).

The protein belongs to the DEAD box helicase family. In terms of processing, phosphorylated on threonine residues. The phosphorylated form is found in the cytoplasm but not in the nucleus. In terms of tissue distribution, isoform 1 is expressed in germ cells. Isoform 2 is highly expressed in Leydig cells and weakly expressed in the pituitary and hypothalamus. Isoform 3 is weakly expressed only in germ cells.

The protein localises to the cytoplasm. Its subcellular location is the nucleus. It carries out the reaction ATP + H2O = ADP + phosphate + H(+). In terms of biological role, ATP-dependent RNA helicase. Required for mRNA export and translation regulation during spermatid development. The chain is ATP-dependent RNA helicase DDX25 (Ddx25) from Rattus norvegicus (Rat).